We begin with the raw amino-acid sequence, 348 residues long: Aldose 1-epimerase (348 aa).

R80 lines the substrate pocket. Catalysis depends on H180, which acts as the Proton donor. Position 243 (D243) interacts with substrate. E311 serves as the catalytic Proton acceptor.

The protein belongs to the aldose epimerase family.

The catalysed reaction is alpha-D-glucose = beta-D-glucose. The protein operates within carbohydrate metabolism; hexose metabolism. Mutarotase converts alpha-aldose to the beta-anomer. It is active on D-glucose, L-arabinose, D-xylose, D-galactose, maltose and lactose. The polypeptide is Aldose 1-epimerase (galM) (Streptococcus thermophilus).